Reading from the N-terminus, the 1382-residue chain is Hepatocyte growth factor receptor (1382 aa).

The N-terminal stretch at 1 to 24 (MKAPAVLAPGILVLLFTLVPRSHG) is a signal peptide. Topologically, residues 25-933 (ECKEALVKSE…VIVQPDQNFM (909 aa)) are extracellular. The region spanning 27-516 (KEALVKSEMN…TGNKITKIPL (490 aa)) is the Sema domain. Asparagine 45 carries N-linked (GlcNAc...) asparagine glycosylation. 4 disulfides stabilise this stretch: cysteine 95–cysteine 101, cysteine 98–cysteine 160, cysteine 133–cysteine 141, and cysteine 173–cysteine 176. Asparagine 106 is a glycosylation site (N-linked (GlcNAc...) asparagine). 2 N-linked (GlcNAc...) asparagine glycosylation sites follow: asparagine 203 and asparagine 359. 2 cysteine pairs are disulfide-bonded: cysteine 299/cysteine 364 and cysteine 386/cysteine 398. N-linked (GlcNAc...) asparagine glycans are attached at residues asparagine 400 and asparagine 406. 4 disulfides stabilise this stretch: cysteine 521–cysteine 539, cysteine 527–cysteine 562, cysteine 530–cysteine 546, and cysteine 542–cysteine 552. 3 consecutive IPT/TIG domains span residues 564-656 (PAIY…FSYV), 658-740 (PVIT…FSYR), and 743-837 (PIVD…LTYV). The O-linked (Man) threonine glycan is linked to threonine 583. N-linked (GlcNAc...) asparagine glycans are attached at residues asparagine 608, asparagine 614, and asparagine 636. Residues threonine 677 and threonine 762 are each glycosylated (O-linked (Man) threonine). Residues asparagine 786 and asparagine 880 are each glycosylated (N-linked (GlcNAc...) asparagine). Residues 934–956 (GLIVGGVSISIILLLLLGLFLWL) traverse the membrane as a helical segment. The Cytoplasmic portion of the chain corresponds to 957-1382 (KKKKRIKDLG…QDNVDGTVDT (426 aa)). Residue serine 967 is modified to Phosphoserine. Threonine 978 is subject to Phosphothreonine. A phosphoserine mark is found at serine 991, serine 998, and serine 1001. Tyrosine 1004 carries the post-translational modification Phosphotyrosine. A Protein kinase domain is found at 1079-1346 (VHFSEVIGRG…RISTIFSTFI (268 aa)). Residues 1085–1093 (IGRGHFGCV) and lysine 1111 contribute to the ATP site. The active-site Proton acceptor is the aspartate 1205. The interaction with RANBP9 stretch occupies residues 1213 to 1382 (LDEKFTVKVA…QDNVDGTVDT (170 aa)). Tyrosine 1231 is subject to Phosphotyrosine. A phosphotyrosine; by autocatalysis mark is found at tyrosine 1235 and tyrosine 1236. Residue threonine 1290 is modified to Phosphothreonine. Residues 1321 to 1360 (WHPKAEMRPSFSELVSRISTIFSTFIGEHYVHVNATYVNV) form an interaction with MUC20 region. Phosphotyrosine; by autocatalysis occurs at positions 1350 and 1357. Tyrosine 1366 is subject to Phosphotyrosine.

This sequence belongs to the protein kinase superfamily. Tyr protein kinase family. In terms of assembly, heterodimer made of an alpha chain (50 kDa) and a beta chain (145 kDa) which are disulfide linked. Binds PLXNB1. Interacts when phosphorylated with downstream effectors including STAT3, PIK3R1, SRC, PCLG1, GRB2 and GAB1. Interacts with SPSB1, SPSB2 and SPSB4. Interacts with INPP5D/SHIP1. When phosphorylated at Tyr-1357, interacts with INPPL1/SHIP2. Interacts with RANBP9 and RANBP10, as well as SPSB1, SPSB2, SPSB3 and SPSB4. SPSB1 binding occurs in the presence and in the absence of HGF, however HGF treatment has a positive effect on this interaction. Interacts with MUC20; prevents interaction with GRB2 and suppresses hepatocyte growth factor-induced cell proliferation. Interacts with GRB10. Interacts with PTPN1 and PTPN2. Interacts with HSP90AA1 and HSP90AB1; the interaction suppresses MET kinase activity. Interacts with tensin TNS3. Interacts (when phosphorylated) with tensin TNS4 (via SH2 domain); the interaction increases MET protein stability by inhibiting MET endocytosis and subsequent lysosomal degradation. Autophosphorylated in response to ligand binding on Tyr-1235 and Tyr-1236 in the kinase domain leading to further phosphorylation of Tyr-1350 and Tyr-1357 in the C-terminal multifunctional docking site. Dephosphorylated by PTPRJ at Tyr-1350 and Tyr-1366. Dephosphorylated by PTPN1 and PTPN2. In terms of processing, ubiquitinated. Ubiquitination by CBL regulates the receptor stability and activity through proteasomal degradation. Post-translationally, O-mannosylation of IPT/TIG domains by TMEM260 is required for protein maturation. O-mannosylated residues are composed of single mannose glycans that are not elongated or modified.

It localises to the membrane. It carries out the reaction L-tyrosyl-[protein] + ATP = O-phospho-L-tyrosyl-[protein] + ADP + H(+). Its activity is regulated as follows. In its inactive state, the C-terminal tail interacts with the catalytic domain and inhibits the kinase activity. Upon ligand binding, the C-terminal tail is displaced and becomes phosphorylated, thus increasing the kinase activity. In terms of biological role, receptor tyrosine kinase that transduces signals from the extracellular matrix into the cytoplasm by binding to hepatocyte growth factor/HGF ligand. Regulates many physiological processes including proliferation, scattering, morphogenesis and survival. Ligand binding at the cell surface induces autophosphorylation of MET on its intracellular domain that provides docking sites for downstream signaling molecules. Following activation by ligand, interacts with the PI3-kinase subunit PIK3R1, PLCG1, SRC, GRB2, STAT3 or the adapter GAB1. Recruitment of these downstream effectors by MET leads to the activation of several signaling cascades including the RAS-ERK, PI3 kinase-AKT, or PLCgamma-PKC. The RAS-ERK activation is associated with the morphogenetic effects while PI3K/AKT coordinates prosurvival effects. During embryonic development, MET signaling plays a role in gastrulation, development and migration of muscles and neuronal precursors, angiogenesis and kidney formation. In adults, participates in wound healing as well as organ regeneration and tissue remodeling. Also promotes differentiation and proliferation of hematopoietic cells. This chain is Hepatocyte growth factor receptor (MET), found in Oryctolagus cuniculus (Rabbit).